A 557-amino-acid polypeptide reads, in one-letter code: 2-isopropylmalate synthase (557 aa).

A Pyruvate carboxyltransferase domain is found at 33–307; it reads PLWLSTDLRD…DPGLDFSDID (275 aa). Positions 42, 246, 248, and 282 each coordinate Mg(2+). The regulatory domain stretch occupies residues 439 to 557; that stretch reads AETPYALKGH…LGQQASIRAA (119 aa).

Belongs to the alpha-IPM synthase/homocitrate synthase family. LeuA type 2 subfamily. In terms of assembly, homodimer. Requires Mg(2+) as cofactor.

The protein resides in the cytoplasm. The catalysed reaction is 3-methyl-2-oxobutanoate + acetyl-CoA + H2O = (2S)-2-isopropylmalate + CoA + H(+). Its pathway is amino-acid biosynthesis; L-leucine biosynthesis; L-leucine from 3-methyl-2-oxobutanoate: step 1/4. In terms of biological role, catalyzes the condensation of the acetyl group of acetyl-CoA with 3-methyl-2-oxobutanoate (2-ketoisovalerate) to form 3-carboxy-3-hydroxy-4-methylpentanoate (2-isopropylmalate). The polypeptide is 2-isopropylmalate synthase (Azotobacter vinelandii (strain DJ / ATCC BAA-1303)).